A 510-amino-acid polypeptide reads, in one-letter code: 2,3-bisphosphoglycerate-independent phosphoglycerate mutase (510 aa).

Residues D13 and S63 each coordinate Mn(2+). S63 functions as the Phosphoserine intermediate in the catalytic mechanism. Substrate is bound by residues H124, 154-155 (RD), R186, R192, 262-265 (RADR), and K334. Residues D401, H405, D442, H443, and H461 each contribute to the Mn(2+) site.

It belongs to the BPG-independent phosphoglycerate mutase family. In terms of assembly, monomer. The cofactor is Mn(2+).

It carries out the reaction (2R)-2-phosphoglycerate = (2R)-3-phosphoglycerate. It functions in the pathway carbohydrate degradation; glycolysis; pyruvate from D-glyceraldehyde 3-phosphate: step 3/5. In terms of biological role, catalyzes the interconversion of 2-phosphoglycerate and 3-phosphoglycerate. The sequence is that of 2,3-bisphosphoglycerate-independent phosphoglycerate mutase from Aliivibrio fischeri (strain ATCC 700601 / ES114) (Vibrio fischeri).